The primary structure comprises 102 residues: MGPFRVDQFPDNYPAFLAVSTSCFLRYNRWCILGIHQEIGSLTLEEGEVFRQFQKEVKKLLRCKVNFHRKCSLYEEIYKKYVYNVPEKKGESSKCVAEEEED.

Its function is as follows. May be involved in the regulation of ssDNA versus dsDNA levels. This chain is Protein V2, found in Beet curly top virus (strain California/Logan) (BCTV).